The chain runs to 284 residues: Diaminopimelate epimerase (284 aa).

Asn20, Gln53, and Asn73 together coordinate substrate. Residue Cys82 is the Proton donor of the active site. Residues 83–84 (GN), Asn167, Asn200, and 218–219 (ER) each bind substrate. The active-site Proton acceptor is the Cys227. Residue 228–229 (GS) participates in substrate binding.

This sequence belongs to the diaminopimelate epimerase family. Homodimer.

The protein resides in the cytoplasm. It carries out the reaction (2S,6S)-2,6-diaminopimelate = meso-2,6-diaminopimelate. Its pathway is amino-acid biosynthesis; L-lysine biosynthesis via DAP pathway; DL-2,6-diaminopimelate from LL-2,6-diaminopimelate: step 1/1. Functionally, catalyzes the stereoinversion of LL-2,6-diaminopimelate (L,L-DAP) to meso-diaminopimelate (meso-DAP), a precursor of L-lysine and an essential component of the bacterial peptidoglycan. This is Diaminopimelate epimerase from Xylella fastidiosa (strain 9a5c).